A 502-amino-acid polypeptide reads, in one-letter code: Cytochrome P450 monooxygenase prhN (502 aa).

Residues 14–30 (SGALLIVGILLLRWALW) traverse the membrane as a helical segment. Asparagine 165 carries an N-linked (GlcNAc...) asparagine glycan. Residue cysteine 443 participates in heme binding. An N-linked (GlcNAc...) asparagine glycan is attached at asparagine 474.

It belongs to the cytochrome P450 family. Heme serves as cofactor.

The protein resides in the membrane. Its pathway is secondary metabolite biosynthesis; terpenoid biosynthesis. Its function is as follows. Cytochrome P450 monooxygenase; part of the gene cluster that mediates the biosynthesis of paraherquonin, a meroterpenoid with a unique, highly congested hexacyclic molecular architecture. The first step of the pathway is the synthesis of 3,5-dimethylorsellinic acid (DMOA) by the polyketide synthase prhL. Synthesis of DMOA is followed by farnesylation by the prenyltransferase prhE, methylesterification by the methyl-transferase prhM, epoxidation of the prenyl chain by the flavin-dependent monooxygenase prhF, and cyclization of the farnesyl moiety by the terpene cyclase prhH, to yield the tetracyclic intermediate, protoaustinoid A. The short chain dehydrogenase prhI then oxidizes the C-3 alcohol group of the terpene cyclase product to transform protoaustinoid A into protoaustinoid B. The FAD-binding monooxygenase prhJ catalyzes the oxidation of protoaustinoid B into preaustinoid A which is further oxidized into preaustinoid A1 by FAD-binding monooxygenase phrK. Finally, prhA leads to berkeleydione via the berkeleyone B intermediate. PrhA is a multifunctional dioxygenase that first desaturates at C5-C6 to form berkeleyone B, followed by rearrangement of the A/B-ring to form the cycloheptadiene moiety in berkeleydione. Berkeleydione serves as the key intermediate for the biosynthesis of paraherquonin as well as many other meroterpenoids. The cytochrome P450 monooxygenases prhB, prhD, and prhN, as well as the isomerase prhC, are probably involved in the late stage of paraherquonin biosynthesis, after the production of berkeleydione. Especially prhC might be a multifunctional enzyme that catalyzes the D-ring expansion via intramolecular methoxy rearrangement, as well as the hydrolysis of the expanded D-ring. In Penicillium brasilianum, this protein is Cytochrome P450 monooxygenase prhN.